A 311-amino-acid polypeptide reads, in one-letter code: Forkhead box protein I2 (311 aa).

The fork-head DNA-binding region spans 99–193 (RPPYSYSALI…DNGNFRRKRR (95 aa)). 2 disordered regions span residues 188–237 (FRRK…TTTC) and 263–294 (FSLRRPPPTAAAHSPQIPNTAPGFAPGHQTGA). Positions 219 to 231 (STPQDPQTSPSPS) are enriched in low complexity.

It is found in the nucleus. In terms of biological role, possible transcriptional activator. The chain is Forkhead box protein I2 from Mus musculus (Mouse).